The sequence spans 193 residues: MSTPAIIDIFRSSGALLEGHFKLTSGLHSNTYFQCAKVLQHPEYLTEICRNIASAFSDVTIDMVISPAVGGIVVGTETGRQLGVKTIFSERKNGEMVLRRGFTLSPEEKVLIVEDVITTGGSVAEVIDIVTKAGAIVAGVGSVVDRSNGKVTLAEKQFSLLCLEVKNYDPDTCPLCAENLPLDAPGSRSLTTS.

114–122 (EDVITTGGS) is a binding site for 5-phospho-alpha-D-ribose 1-diphosphate. Residues threonine 118 and arginine 146 each coordinate orotate.

Belongs to the purine/pyrimidine phosphoribosyltransferase family. PyrE subfamily. In terms of assembly, homodimer. Mg(2+) is required as a cofactor.

It carries out the reaction orotidine 5'-phosphate + diphosphate = orotate + 5-phospho-alpha-D-ribose 1-diphosphate. It participates in pyrimidine metabolism; UMP biosynthesis via de novo pathway; UMP from orotate: step 1/2. Functionally, catalyzes the transfer of a ribosyl phosphate group from 5-phosphoribose 1-diphosphate to orotate, leading to the formation of orotidine monophosphate (OMP). This is Orotate phosphoribosyltransferase from Chlorobium phaeobacteroides (strain BS1).